The sequence spans 687 residues: Outer dynein arm-docking complex subunit 1 (687 aa).

Coiled-coil stretches lie at residues 100-193 (QVRV…YLNV), 222-267 (REEA…LKLK), and 341-421 (INEQ…LFTR). A disordered region spans residues 126–147 (SRNSAHSKNARSPGCVQHDKVK). 3 disordered regions span residues 363 to 388 (VSGR…QRVD), 487 to 511 (FPKK…AKDD), and 540 to 687 (ESTP…QSNY). Residues 366–388 (RRSEEDRRAQQEQQRAELQQRVD) show a composition bias toward basic and acidic residues. Low complexity predominate over residues 544–556 (SMTSSTQKVSSSS). Polar residues-rich tracts occupy residues 557-611 (RLVT…SSRG) and 620-629 (RSPNSSSYLG). Residues 660-680 (SPGPASSPGPASSTGQASSTS) show a composition bias toward low complexity.

It belongs to the ODA1/DCC2 family. As to quaternary structure, component of the outer dynein arm-docking complex along with ODAD2, ODAD3, ODAD4 and CLXN. Interacts with ODAD3. Interacts with ODAD4; this interaction may facilitate the recruitment and/or attachment of outer dynein arm docking complex proteins, including ODAD1, ODAD3, and ODAD4 to ciliary axonemes. Interacts with DNAH9. Interacts with MNS1. Interacts with PIERCE1 and PIERCE2; the interactions link the outer dynein arms docking complex (ODA-DC) to the internal microtubule inner proteins (MIP) in cilium axoneme. As to expression, expressed in trachea multiciliated cells.

The protein localises to the cytoplasm. It localises to the cytoskeleton. It is found in the cilium axoneme. Functionally, component of the outer dynein arm-docking complex (ODA-DC) that mediates outer dynein arms (ODA) binding onto the doublet microtubule. Involved in mediating assembly of both ODAs and their axonemal docking complex onto ciliary microtubules. The polypeptide is Outer dynein arm-docking complex subunit 1 (ODAD1) (Bos taurus (Bovine)).